The chain runs to 84 residues: Small ribosomal subunit protein uS17 (84 aa).

It belongs to the universal ribosomal protein uS17 family. In terms of assembly, part of the 30S ribosomal subunit.

In terms of biological role, one of the primary rRNA binding proteins, it binds specifically to the 5'-end of 16S ribosomal RNA. The sequence is that of Small ribosomal subunit protein uS17 from Yersinia enterocolitica serotype O:8 / biotype 1B (strain NCTC 13174 / 8081).